The primary structure comprises 652 residues: DNA ligase (652 aa).

NAD(+) is bound by residues 29–33, 78–79, and glutamate 107; these read DAEYD and SL. Lysine 109 acts as the N6-AMP-lysine intermediate in catalysis. 4 residues coordinate NAD(+): arginine 130, glutamate 164, lysine 278, and lysine 302. Residues cysteine 395, cysteine 398, cysteine 413, and cysteine 418 each contribute to the Zn(2+) site. Positions 577–652 constitute a BRCT domain; it reads ASDAALTGMT…IKDEAWLESL (76 aa).

Belongs to the NAD-dependent DNA ligase family. LigA subfamily. Mg(2+) serves as cofactor. Mn(2+) is required as a cofactor.

The enzyme catalyses NAD(+) + (deoxyribonucleotide)n-3'-hydroxyl + 5'-phospho-(deoxyribonucleotide)m = (deoxyribonucleotide)n+m + AMP + beta-nicotinamide D-nucleotide.. In terms of biological role, DNA ligase that catalyzes the formation of phosphodiester linkages between 5'-phosphoryl and 3'-hydroxyl groups in double-stranded DNA using NAD as a coenzyme and as the energy source for the reaction. It is essential for DNA replication and repair of damaged DNA. The polypeptide is DNA ligase (Streptococcus mutans serotype c (strain ATCC 700610 / UA159)).